The chain runs to 496 residues: Genome polyprotein (496 aa).

Residues 1 to 447 (SRCTHLENRD…HTVLGGAFNS (447 aa)) lie on the Extracellular side of the membrane. Intrachain disulfides connect Cys3–Cys30, Cys60–Cys116, Cys60–Cys121, Cys74–Cys105, Cys92–Cys116, and Cys92–Cys121. Residues 98 to 111 (DRGWGNHCGLFGKG) are fusion peptide. Asn154 carries N-linked (GlcNAc...) asparagine; by host glycosylation. 2 disulfides stabilise this stretch: Cys186-Cys290 and Cys307-Cys338. Residues 448-468 (IFGGVGFLPKLLMGVALAWLG) traverse the membrane as a helical segment. Over 469-479 (LNTRNPTMSMS) the chain is Cytoplasmic. Residues 480–496 (FLLTGGLVLAMTLGVGA) form a helical membrane-spanning segment.

As to quaternary structure, homodimer; in the endoplasmic reticulum and Golgi. In terms of processing, N-glycosylated.

It localises to the virion membrane. The protein resides in the host endoplasmic reticulum membrane. Binds to host cell surface receptor and mediates fusion between viral and cellular membranes. Envelope protein is synthesized in the endoplasmic reticulum in the form of heterodimer with protein prM. They play a role in virion budding in the ER, and the newly formed immature particle is covered with 60 spikes composed of heterodimer between precursor prM and envelope protein E. The virion is transported to the Golgi apparatus where the low pH causes dissociation of PrM-E heterodimers and formation of E homodimers. prM-E cleavage is ineficient, and many virions are only partially matured. These uncleaved prM would play a role in immune evasion. This Bos taurus (Bovine) protein is Genome polyprotein.